The sequence spans 149 residues: Transcription factor Atoh7 (149 aa).

Residues 41–93 enclose the bHLH domain; it reads RRRLAANARERRRMQGLNTAFDRLRRVVPQWGQDKKLSKYETLQMALSYIIAL.

Forms a heterodimer with TCF3 isoform E47; interaction may be required for DNA-binding in certain situations. Expressed in retinal ganglion cells. Expressed in the cerebellum, trapezoid body, ventral nucleus of the lateral lamniscus and in areas of the auditory hindbrain such as the cochlear nucleus, lateral superior olive and medial nucleus of the trapezoid body. Expressed in the modiolar nerve root and in the cochlear in a small group of bushy neurons within the acoustic nerve. Expressed weakly in the sensory epithelia of the saccule and utricle.

The protein localises to the nucleus. Its subcellular location is the perikaryon. The protein resides in the cell projection. It is found in the axon. Its function is as follows. Transcription factor that binds to DNA at the consensus sequence 5'-CAG[GC]TG-3'. Dimerization with TCF3 isoform E47 may be required in certain situations. Binds to gene promoters and enhancer elements, and thereby regulates a transcriptional program of retinal ganglion cell (RGC) determinant genes. Although the exact mechanism is not certain, retinal transcription regulation by ATOH7 has a role in RGC determination and survival, photoreceptor population development, targeting of RGC axons to the optic nerve and development of the retino-hypothalamic tract. Binds to its own promoter and enhancer sequences, suggesting autoregulation of ATOH7 transcription. Required for retinal circadian rhythm photoentrainment. Plays a role in brainstem auditory signaling and binaural processing. This Mus musculus (Mouse) protein is Transcription factor Atoh7.